We begin with the raw amino-acid sequence, 580 residues long: Trafficking protein particle complex subunit 14 (580 aa).

Disordered regions lie at residues 95–134 and 480–533; these read GSAG…TSGG and VSHP…RSGS. The segment covering 105–116 has biased composition (gly residues); the sequence is PGGGDPGGGGLF. Phosphoserine is present on S491. The span at 492–502 shows a compositional bias: low complexity; it reads RKSSPSSPAVR. The segment covering 512–525 has biased composition (polar residues); that stretch reads LGRSQSFSHQQPSR. S517 is subject to Phosphoserine. T541 bears the Phosphothreonine mark. S546 is subject to Phosphoserine.

Component of the multisubunit TRAPP II complex, which includes at least TRAPPC1, TRAPPC2, TRAPPC2L, TRAPPC3, TRAPPC4, TRAPPC5, TRAPPC6A/B, TRAPPC9, TRAPPC10 and TRAPPC14. TRAPPC9, TRAPPC10 and TRAPPC14 are specific subunits of the TRAPP II complex. Interacts with alpha-tubulin during mitosis. Interacts with RAB3IP (via the N-terminal region); this interaction mediates RAB3IP association with the TRAPP II complex. Interacts with TRAPPC10. Interacts with FBF1.

It is found in the cytoplasm. Its subcellular location is the cytoskeleton. The protein resides in the spindle. It localises to the vesicle. The protein localises to the midbody. Its function is as follows. Specific subunit of the TRAPP (transport protein particle) II complex, a highly conserved vesicle tethering complex that functions in late Golgi trafficking as a membrane tether. TRAPPC14 is dispensable for TRAPPII complex integrity but mediates RAB3IP preciliary vesicle trafficking to the mother centriole during ciliogenesis. Modulates YAP1 activity as transcriptional regulator. The protein is Trafficking protein particle complex subunit 14 of Mus musculus (Mouse).